Here is a 510-residue protein sequence, read N- to C-terminus: Light-independent protochlorophyllide reductase subunit B (510 aa).

Asp-36 lines the [4Fe-4S] cluster pocket. Residue Asp-296 is the Proton donor of the active site. 431–432 serves as a coordination point for substrate; that stretch reads GM.

This sequence belongs to the ChlB/BchB/BchZ family. Protochlorophyllide reductase is composed of three subunits; ChlL, ChlN and ChlB. Forms a heterotetramer of two ChlB and two ChlN subunits. It depends on [4Fe-4S] cluster as a cofactor.

Its subcellular location is the plastid. The protein localises to the chloroplast. It catalyses the reaction chlorophyllide a + oxidized 2[4Fe-4S]-[ferredoxin] + 2 ADP + 2 phosphate = protochlorophyllide a + reduced 2[4Fe-4S]-[ferredoxin] + 2 ATP + 2 H2O. The protein operates within porphyrin-containing compound metabolism; chlorophyll biosynthesis (light-independent). Component of the dark-operative protochlorophyllide reductase (DPOR) that uses Mg-ATP and reduced ferredoxin to reduce ring D of protochlorophyllide (Pchlide) to form chlorophyllide a (Chlide). This reaction is light-independent. The NB-protein (ChlN-ChlB) is the catalytic component of the complex. The protein is Light-independent protochlorophyllide reductase subunit B of Physcomitrium patens (Spreading-leaved earth moss).